Here is a 572-residue protein sequence, read N- to C-terminus: Probable cysteine--tRNA ligase, mitochondrial (572 aa).

Cysteine 81 lines the Zn(2+) pocket. L-cysteine is bound at residue glycine 82. The 'HIGH' region signature appears at 83-93; the sequence is PTVYDHAHLGH. L-cysteine is bound at residue threonine 122. Positions 127-130 match the 'KIIK' region motif; the sequence is KIIK. Positions 260, 285, and 289 each coordinate Zn(2+). L-cysteine is bound at residue histidine 285. The short motif at 320–324 is the 'KMSKS' region element; that stretch reads KMSKS. Position 323 (lysine 323) interacts with ATP.

It belongs to the class-I aminoacyl-tRNA synthetase family. It depends on Zn(2+) as a cofactor.

It is found in the mitochondrion. It carries out the reaction tRNA(Cys) + L-cysteine + ATP = L-cysteinyl-tRNA(Cys) + AMP + diphosphate. The catalysed reaction is 2 L-cysteine = S-sulfanyl-L-cysteine + L-alanine. The enzyme catalyses S-sulfanyl-L-cysteine + L-cysteine = S-disulfanyl-L-cysteine + L-alanine. It catalyses the reaction S-sulfanyl-L-cysteine + tRNA(Cys) + ATP = (S)-sulfanyl-L-cysteinyl-tRNA(Cys) + AMP + diphosphate. It carries out the reaction S-disulfanyl-L-cysteine + tRNA(Cys) + ATP = (S)-disulfanyl-L-cysteinyl-tRNA(Cys) + AMP + diphosphate. In terms of biological role, mitochondrial cysteine-specific aminoacyl-tRNA synthetase that catalyzes the ATP-dependent ligation of cysteine to tRNA(Cys). In addition to its role as an aminoacyl-tRNA synthetase, has also cysteine persulfide synthase activity. Produces reactive persulfide species such as cysteine persulfide (CysSSH) from substrate cysteine and mediate direct incorporation of CysSSH into proteins during translations, resulting in protein persulfides and polysulfides. CysSSHs behave as potent antioxidants and cellular protectants. The chain is Probable cysteine--tRNA ligase, mitochondrial (cars2) from Xenopus tropicalis (Western clawed frog).